The sequence spans 192 residues: Probable nicotinate-nucleotide adenylyltransferase (192 aa).

This sequence belongs to the NadD family.

The catalysed reaction is nicotinate beta-D-ribonucleotide + ATP + H(+) = deamido-NAD(+) + diphosphate. It functions in the pathway cofactor biosynthesis; NAD(+) biosynthesis; deamido-NAD(+) from nicotinate D-ribonucleotide: step 1/1. Functionally, catalyzes the reversible adenylation of nicotinate mononucleotide (NaMN) to nicotinic acid adenine dinucleotide (NaAD). The sequence is that of Probable nicotinate-nucleotide adenylyltransferase from Shouchella clausii (strain KSM-K16) (Alkalihalobacillus clausii).